We begin with the raw amino-acid sequence, 275 residues long: Seminase (275 aa).

A signal peptide spans 1 to 19 (MKRLLFLFLLAGILINNHA). A glycan (N-linked (GlcNAc...) asparagine) is linked at N23. The region spanning 44–268 (VIGGRVTTNA…VKPFIVKGIK (225 aa)) is the Peptidase S1 domain. C70 and C86 are joined by a disulfide. Catalysis depends on charge relay system residues H85 and D131. Disulfide bonds link C194/C210 and C220/C244. The active-site Charge relay system is S224.

Belongs to the peptidase S1 family. In terms of processing, undergoes cleavage in the male during mating with a cleaved product detected in the ejaculatory duct and/or bulb of males by 8-10 minutes after the start of mating. Further cleavage occurs in the mated female. As to expression, produced in the male accessory glands and secreted into seminal fluid.

The protein localises to the secreted. Its function is as follows. Seminal fluid protease which is required for cleavage and probably also activation of the metalloprotease Semp1. Also required for a number of female post-mating responses independent of Semp1 including egg laying and sperm usage. This Drosophila melanogaster (Fruit fly) protein is Seminase.